A 188-amino-acid polypeptide reads, in one-letter code: GMP synthase [glutamine-hydrolyzing] subunit A (188 aa).

The Glutamine amidotransferase type-1 domain occupies 1-188 (MIIIMDNGGQ…RNFAKICGEL (188 aa)). C78 serves as the catalytic Nucleophile. Active-site residues include H165 and E167.

Heterodimer composed of a glutamine amidotransferase subunit (A) and a GMP-binding subunit (B).

It carries out the reaction XMP + L-glutamine + ATP + H2O = GMP + L-glutamate + AMP + diphosphate + 2 H(+). It functions in the pathway purine metabolism; GMP biosynthesis; GMP from XMP (L-Gln route): step 1/1. Catalyzes the synthesis of GMP from XMP. This is GMP synthase [glutamine-hydrolyzing] subunit A from Pyrococcus furiosus (strain ATCC 43587 / DSM 3638 / JCM 8422 / Vc1).